A 691-amino-acid polypeptide reads, in one-letter code: Elongation factor G (691 aa).

Residues 8 to 283 enclose the tr-type G domain; the sequence is EDYRNFGIMA…AVVDYLPSPA (276 aa). GTP contacts are provided by residues 17-24, 81-85, and 135-138; these read AHIDAGKT, DTPGH, and NKMD.

Belongs to the TRAFAC class translation factor GTPase superfamily. Classic translation factor GTPase family. EF-G/EF-2 subfamily.

The protein localises to the cytoplasm. Catalyzes the GTP-dependent ribosomal translocation step during translation elongation. During this step, the ribosome changes from the pre-translocational (PRE) to the post-translocational (POST) state as the newly formed A-site-bound peptidyl-tRNA and P-site-bound deacylated tRNA move to the P and E sites, respectively. Catalyzes the coordinated movement of the two tRNA molecules, the mRNA and conformational changes in the ribosome. This is Elongation factor G from Methylobacterium radiotolerans (strain ATCC 27329 / DSM 1819 / JCM 2831 / NBRC 15690 / NCIMB 10815 / 0-1).